The primary structure comprises 131 residues: Small ribosomal subunit protein bS6 (131 aa).

The tract at residues 96-131 (VTAPSPMMKEEKSKSLLAKDEAAAPAPAPATEQATA) is disordered. The span at 103 to 117 (MKEEKSKSLLAKDEA) shows a compositional bias: basic and acidic residues. Residues 118-131 (AAPAPAPATEQATA) show a composition bias toward low complexity.

The protein belongs to the bacterial ribosomal protein bS6 family.

Functionally, binds together with bS18 to 16S ribosomal RNA. The sequence is that of Small ribosomal subunit protein bS6 from Methylobacillus flagellatus (strain ATCC 51484 / DSM 6875 / VKM B-1610 / KT).